The primary structure comprises 435 residues: Methylenetetrahydrofolate--tRNA-(uracil-5-)-methyltransferase TrmFO (435 aa).

9–14 (GAGLAG) is an FAD binding site.

It belongs to the MnmG family. TrmFO subfamily. FAD is required as a cofactor.

The protein localises to the cytoplasm. The enzyme catalyses uridine(54) in tRNA + (6R)-5,10-methylene-5,6,7,8-tetrahydrofolate + NADH + H(+) = 5-methyluridine(54) in tRNA + (6S)-5,6,7,8-tetrahydrofolate + NAD(+). It carries out the reaction uridine(54) in tRNA + (6R)-5,10-methylene-5,6,7,8-tetrahydrofolate + NADPH + H(+) = 5-methyluridine(54) in tRNA + (6S)-5,6,7,8-tetrahydrofolate + NADP(+). In terms of biological role, catalyzes the folate-dependent formation of 5-methyl-uridine at position 54 (M-5-U54) in all tRNAs. The polypeptide is Methylenetetrahydrofolate--tRNA-(uracil-5-)-methyltransferase TrmFO (Staphylococcus aureus (strain MRSA252)).